Consider the following 274-residue polypeptide: Sulfur carrier protein FdhD (274 aa).

C121 (cysteine persulfide intermediate) is an active-site residue. Residue 258 to 263 participates in Mo-bis(molybdopterin guanine dinucleotide) binding; sequence FSKPGR.

It belongs to the FdhD family.

The protein resides in the cytoplasm. In terms of biological role, required for formate dehydrogenase (FDH) activity. Acts as a sulfur carrier protein that transfers sulfur from IscS to the molybdenum cofactor prior to its insertion into FDH. The protein is Sulfur carrier protein FdhD of Yersinia pseudotuberculosis serotype IB (strain PB1/+).